The chain runs to 325 residues: Xylosidase/arabinosidase (325 aa).

The active-site Proton acceptor is D16. E224 functions as the Proton donor in the catalytic mechanism.

Belongs to the glycosyl hydrolase 43 family.

It carries out the reaction Hydrolysis of (1-&gt;4)-beta-D-xylans, to remove successive D-xylose residues from the non-reducing termini.. The enzyme catalyses Hydrolysis of terminal non-reducing alpha-L-arabinofuranoside residues in alpha-L-arabinosides.. The polypeptide is Xylosidase/arabinosidase (xsa) (Bacteroides ovatus).